The chain runs to 487 residues: Bifunctional protein GlmU (487 aa).

A pyrophosphorylase region spans residues 1 to 235 (MSHSPTPLAA…PEEASGVNDR (235 aa)). Residues 13-16 (LAAG), Lys27, Gln82, 87-88 (GT), 110-112 (SGD), Gly147, Glu162, Asn177, and Asn233 each bind UDP-N-acetyl-alpha-D-glucosamine. Asp112 lines the Mg(2+) pocket. Asn233 is a Mg(2+) binding site. The linker stretch occupies residues 236 to 256 (EELARAGRVLLRRRASELMRS). An N-acetyltransferase region spans residues 257–487 (GVTIEDPERF…ADSPRGGRAS (231 aa)). Positions 339 and 357 each coordinate UDP-N-acetyl-alpha-D-glucosamine. His369 functions as the Proton acceptor in the catalytic mechanism. Tyr372 and Asn383 together coordinate UDP-N-acetyl-alpha-D-glucosamine. Acetyl-CoA-binding positions include Ala386, 392–393 (NY), Ser411, Ala429, and Arg446. The tract at residues 453–487 (EGWVARRKAEAQNKGAAEAAPAPSPADSPRGGRAS) is disordered. The segment covering 468-481 (AAEAAPAPSPADSP) has biased composition (low complexity).

The protein in the N-terminal section; belongs to the N-acetylglucosamine-1-phosphate uridyltransferase family. In the C-terminal section; belongs to the transferase hexapeptide repeat family. As to quaternary structure, homotrimer. Mg(2+) is required as a cofactor.

It localises to the cytoplasm. It carries out the reaction alpha-D-glucosamine 1-phosphate + acetyl-CoA = N-acetyl-alpha-D-glucosamine 1-phosphate + CoA + H(+). The enzyme catalyses N-acetyl-alpha-D-glucosamine 1-phosphate + UTP + H(+) = UDP-N-acetyl-alpha-D-glucosamine + diphosphate. It participates in nucleotide-sugar biosynthesis; UDP-N-acetyl-alpha-D-glucosamine biosynthesis; N-acetyl-alpha-D-glucosamine 1-phosphate from alpha-D-glucosamine 6-phosphate (route II): step 2/2. Its pathway is nucleotide-sugar biosynthesis; UDP-N-acetyl-alpha-D-glucosamine biosynthesis; UDP-N-acetyl-alpha-D-glucosamine from N-acetyl-alpha-D-glucosamine 1-phosphate: step 1/1. It functions in the pathway bacterial outer membrane biogenesis; LPS lipid A biosynthesis. Catalyzes the last two sequential reactions in the de novo biosynthetic pathway for UDP-N-acetylglucosamine (UDP-GlcNAc). The C-terminal domain catalyzes the transfer of acetyl group from acetyl coenzyme A to glucosamine-1-phosphate (GlcN-1-P) to produce N-acetylglucosamine-1-phosphate (GlcNAc-1-P), which is converted into UDP-GlcNAc by the transfer of uridine 5-monophosphate (from uridine 5-triphosphate), a reaction catalyzed by the N-terminal domain. The chain is Bifunctional protein GlmU from Anaeromyxobacter sp. (strain Fw109-5).